Here is a 547-residue protein sequence, read N- to C-terminus: Tripartite motif-containing protein 5 (547 aa).

Ala2 bears the N-acetylalanine mark. The RING-type zinc-finger motif lies at 15–59; it reads CPICLELLTEPLSLDCGHSFCQACITANHKESTLHQGERSCPLCR. Phosphoserine is present on Ser86. The segment at 91–132 adopts a B box-type zinc-finger fold; the sequence is QKVDRCARHGEKLLLFCQQHGNVICWLCERSQEHRGHSTFLV. 4 residues coordinate Zn(2+): Cys96, His99, Cys118, and His124. A coiled-coil region spans residues 132 to 225; that stretch reads VEEVAQKYQE…AQSENDMVLQ (94 aa). The interval 186–199 is required for interaction with GABARAP and for autophagy; that stretch reads FKQLRDILDCEESN. The B30.2/SPRY domain maps to 280-547; that stretch reads PDLKGMLQVF…LPMTLCSPSS (268 aa).

It belongs to the TRIM/RBCC family. Can form homodimers and homotrimers. In addition to lower-order dimerization, also exhibits a higher-order multimerization and both low- and high-order multimerizations are essential for its restriction activity. Interacts with BTBD1 and BTBD2. Interacts with PSMC4, PSMC5, PSMD7 and HSPA8/HSC70. Interacts (via B30.2/SPRY domain) with HSPA1A/B. Interacts with PSMC2, MAP3K7/TAK1, TAB2 and TAB3. Interacts with SQSTM1. Interacts with TRIM6 and TRIM34. Interacts with ULK1 (phosphorylated form), GABARAP, GABARAPL1, GABARAPL2, MAP1LC3A, MAP1LC3C and BECN1. In terms of processing, degraded in a proteasome-independent fashion in the absence of viral infection but in a proteasome-dependent fashion following exposure to restriction sensitive virus. Autoubiquitinated in a RING finger- and UBE2D2-dependent manner. Monoubiquitinated by TRIM21. Deubiquitinated by Yersinia YopJ. Ubiquitination may not lead to proteasomal degradation.

The protein localises to the cytoplasm. The protein resides in the nucleus. It catalyses the reaction S-ubiquitinyl-[E2 ubiquitin-conjugating enzyme]-L-cysteine + [acceptor protein]-L-lysine = [E2 ubiquitin-conjugating enzyme]-L-cysteine + N(6)-ubiquitinyl-[acceptor protein]-L-lysine.. Its pathway is protein modification; protein ubiquitination. Capsid-specific restriction factor that prevents infection from non-host-adapted retroviruses. Blocks viral replication early in the life cycle, after viral entry but before reverse transcription. In addition to acting as a capsid-specific restriction factor, also acts as a pattern recognition receptor that activates innate immune signaling in response to the retroviral capsid lattice. Binding to the viral capsid triggers its E3 ubiquitin ligase activity, and in concert with the heterodimeric ubiquitin conjugating enzyme complex UBE2V1-UBE2N (also known as UBC13-UEV1A complex) generates 'Lys-63'-linked polyubiquitin chains, which in turn are catalysts in the autophosphorylation of the MAP3K7/TAK1 complex (includes TAK1, TAB2, and TAB3). Activation of the MAP3K7/TAK1 complex by autophosphorylation results in the induction and expression of NF-kappa-B and MAPK-responsive inflammatory genes, thereby leading to an innate immune response in the infected cell. Plays a role in regulating autophagy through activation of autophagy regulator BECN1 by causing its dissociation from its inhibitors BCL2 and TAB2. This Ateles geoffroyi (Black-handed spider monkey) protein is Tripartite motif-containing protein 5 (TRIM5).